Consider the following 231-residue polypeptide: ATP phosphoribosyltransferase (231 aa).

This sequence belongs to the ATP phosphoribosyltransferase family. Short subfamily. In terms of assembly, heteromultimer composed of HisG and HisZ subunits.

It is found in the cytoplasm. It catalyses the reaction 1-(5-phospho-beta-D-ribosyl)-ATP + diphosphate = 5-phospho-alpha-D-ribose 1-diphosphate + ATP. Its pathway is amino-acid biosynthesis; L-histidine biosynthesis; L-histidine from 5-phospho-alpha-D-ribose 1-diphosphate: step 1/9. Catalyzes the condensation of ATP and 5-phosphoribose 1-diphosphate to form N'-(5'-phosphoribosyl)-ATP (PR-ATP). Has a crucial role in the pathway because the rate of histidine biosynthesis seems to be controlled primarily by regulation of HisG enzymatic activity. In Sinorhizobium medicae (strain WSM419) (Ensifer medicae), this protein is ATP phosphoribosyltransferase.